The primary structure comprises 269 residues: Putative pyruvate, phosphate dikinase regulatory protein (269 aa).

An ADP-binding site is contributed by 153–160 (GVSRTSKT).

Belongs to the pyruvate, phosphate/water dikinase regulatory protein family. PDRP subfamily.

It carries out the reaction N(tele)-phospho-L-histidyl/L-threonyl-[pyruvate, phosphate dikinase] + ADP = N(tele)-phospho-L-histidyl/O-phospho-L-threonyl-[pyruvate, phosphate dikinase] + AMP + H(+). The catalysed reaction is N(tele)-phospho-L-histidyl/O-phospho-L-threonyl-[pyruvate, phosphate dikinase] + phosphate + H(+) = N(tele)-phospho-L-histidyl/L-threonyl-[pyruvate, phosphate dikinase] + diphosphate. In terms of biological role, bifunctional serine/threonine kinase and phosphorylase involved in the regulation of the pyruvate, phosphate dikinase (PPDK) by catalyzing its phosphorylation/dephosphorylation. The protein is Putative pyruvate, phosphate dikinase regulatory protein of Pediococcus pentosaceus (strain ATCC 25745 / CCUG 21536 / LMG 10740 / 183-1w).